A 152-amino-acid polypeptide reads, in one-letter code: Nucleoside diphosphate kinase (152 aa).

Positions 11, 59, 87, 93, 104, and 114 each coordinate ATP. His117 serves as the catalytic Pros-phosphohistidine intermediate.

The protein belongs to the NDK family. As to quaternary structure, homotetramer. Requires Mg(2+) as cofactor.

Its subcellular location is the cytoplasm. It carries out the reaction a 2'-deoxyribonucleoside 5'-diphosphate + ATP = a 2'-deoxyribonucleoside 5'-triphosphate + ADP. The catalysed reaction is a ribonucleoside 5'-diphosphate + ATP = a ribonucleoside 5'-triphosphate + ADP. Functionally, major role in the synthesis of nucleoside triphosphates other than ATP. The ATP gamma phosphate is transferred to the NDP beta phosphate via a ping-pong mechanism, using a phosphorylated active-site intermediate. In Prochlorococcus marinus subsp. pastoris (strain CCMP1986 / NIES-2087 / MED4), this protein is Nucleoside diphosphate kinase.